The chain runs to 498 residues: Osteoclast stimulatory transmembrane protein (498 aa).

The Cytoplasmic segment spans residues 1-51 (MRTIRAATEHLFGLGWKFWRLGICKAVVPLQAAWKAFSQPVPASCNELLTQ). Residues 52-72 (LLLCVSLASLIAGLAHHWLVS) traverse the membrane as a helical segment. Residues 73 to 81 (LQLYPLGPP) lie on the Extracellular side of the membrane. Residues 82–102 (ALVTSLCGLFVFLSLGLVPPI) form a helical membrane-spanning segment. At 103–121 (RCLFVLSVPTLGSKQGRRL) the chain is on the cytoplasmic side. Residues 122 to 142 (LLSYSAANLAVAVVPNVLGNV) traverse the membrane as a helical segment. The Extracellular portion of the chain corresponds to 143-226 (RAAGQVLSCV…LARAALGTQR (84 aa)). A helical membrane pass occupies residues 227–247 (VVTGLFLLGLLGESAWYLHRY). Topologically, residues 248–303 (LTDLRFDNIYATRQLVRQLAQAGATHLLTSPPPWLLQTAQPKLSREELLSCLLRLG) are cytoplasmic. A helical transmembrane segment spans residues 304–324 (LLALLLVATAVTVASDYGAFL). Residues 325 to 401 (LAQAAVAWAQ…QAQPPRVTAA (77 aa)) lie on the Extracellular side of the membrane. Residues 402–422 (LAAGALQLLAGATLVLQAYAW) traverse the membrane as a helical segment. The Cytoplasmic portion of the chain corresponds to 423–498 (RLRHTIAASF…DSLGPPYDLE (76 aa)). A disordered region spans residues 449-498 (QRRHNQSDHLNKQPGTMATRESRKPGQGTRTLESQGPQAHDSLGPPYDLE). The span at 476-485 (GTRTLESQGP) shows a compositional bias: polar residues.

In terms of tissue distribution, expressed in osteoclast (at protein level). Ubiquitous. Highly expressed in multi-nuclear osteoclast cells compared to mono-nuclear macrophages. Expressed in foreign body giant cells (FBGCs).

It localises to the membrane. Probable cell surface receptor that plays a role in cellular fusion and cell differentiation. Cooperates with DCSTAMP in modulating cell-cell fusion in both osteoclasts and foreign body giant cells (FBGCs). Involved in osteoclast bone resorption. Promotes osteoclast differentiation and may play a role in the multinucleated osteoclast maturation. The protein is Osteoclast stimulatory transmembrane protein (Ocstamp) of Mus musculus (Mouse).